A 425-amino-acid polypeptide reads, in one-letter code: Ribosome biogenesis protein WDR12 homolog (425 aa).

Residues 13–94 (LQLHLITKQK…EDTVELEYVE (82 aa)) form a ubiquitin-like (UBL) domain region. 7 WD repeats span residues 106-143 (LHDDWVSAVEARDNWILTGCYDNTLNLWTTKGKHKLTI), 145-187 (GHIA…NSVE), 194-233 (GHERGVDCIAANGSKTKMATGSWDTMLKIWSTDVRSGGGD), 258-296 (GHRECISGVQWIDDNTLVTSSWDHTIKIWDLALNGIKSE), 298-337 (SGNKSFFDLSYSKLNGLIITASPDKNLRLYDPKSNQGTLV), 343-383 (GHTQ…APIF), and 387-425 (GHEDKVLACDWSNPRFILSGGSDNSVRVFKSKIAIGGEK). The tract at residues 227–247 (VRSGGGDSEPSTSKRQKLDQG) is disordered.

The protein belongs to the WD repeat WDR12/YTM1 family.

The protein localises to the nucleus. It is found in the nucleolus. Its subcellular location is the nucleoplasm. Required for maturation of ribosomal RNAs and formation of the large ribosomal subunit. The protein is Ribosome biogenesis protein WDR12 homolog of Culex quinquefasciatus (Southern house mosquito).